The chain runs to 465 residues: Probable inactive receptor-like kinase BSK12 (465 aa).

Positions methionine 1–aspartate 12 are enriched in polar residues. The disordered stretch occupies residues methionine 1–proline 34. The N-myristoyl glycine moiety is linked to residue glycine 2. S-palmitoyl cysteine attachment occurs at residues cysteine 3 and cysteine 4. The Protein kinase domain occupies phenylalanine 50–leucine 291. ATP contacts are provided by residues valine 56–valine 64 and lysine 78.

Belongs to the protein kinase superfamily. Ser/Thr protein kinase family. In terms of assembly, interacts with YDA. Diacylation-mediated membrane association is essential for BSK12 function. Expressed at the mRNA level in the sperm cells in mature pollen, but the protein is only detectable in the zygote and the micropylar endosperm upon fertilization.

Its subcellular location is the cell membrane. Functionally, probable inactive protein kinase that activates the YODA MAP kinase cascade, which regulates the asymmetric first division and embryo polarity, by promoting the elongation of the zygote and the development of its basal daughter cell into the extra-embryonic suspensor. Acts as an adapter at the plasma membrane, possibly by recruiting and binding an activator. In Arabidopsis thaliana (Mouse-ear cress), this protein is Probable inactive receptor-like kinase BSK12.